The chain runs to 331 residues: 5'-AMP-activated protein kinase subunit gamma-1 (331 aa).

Over residues 1–12 the composition is skewed to polar residues; sequence METVISSDSSPA. Residues 1–26 are disordered; it reads METVISSDSSPAVENEHPQETPESNN. CBS domains follow at residues 43 to 103, 125 to 187, and 198 to 260; these read PTSS…KSAL, SFKP…PKPE, and IGTY…NLDV. ADP contacts are provided by residues arginine 70, 85 to 90, valine 130, 151 to 152, and lysine 170; these read MLTITD and HR. Residues arginine 70, 85–90, valine 130, histidine 151, 151–152, lysine 170, threonine 200, alanine 205, 226–227, and 242–245 each bind AMP; these read MLTITD, HR, SA, and SKFD. ATP contacts are provided by residues arginine 70, 85–90, valine 130, 151–152, arginine 152, and lysine 170; these read MLTITD and HR. The AMPK pseudosubstrate motif lies at 138 to 159; that stretch reads LFDAVSSLIRNKIHRLPVIDPE. 242-245 contacts ADP; the sequence is SKFD. Residue 242–245 participates in ATP binding; sequence SKFD. Serine 261 carries the post-translational modification Phosphoserine; by ULK1. Residue threonine 263 is modified to Phosphothreonine; by ULK1. Arginine 269 contacts ADP. Position 269 (arginine 269) interacts with AMP. Residue arginine 269 participates in ATP binding. Phosphoserine; by ULK1 is present on serine 270. A CBS 4 domain is found at 272 to 329; that stretch reads YFEGVLKCYLHETLETIINRLVEAEVHRLVVVDENDVVKGIVSLSDILQALVLTGGEK. Residues leucine 277 and 298 to 299 each bind ADP; that span reads HR. AMP-binding positions include leucine 277, histidine 298, 298 to 299, and 314 to 317; these read HR and SLSD. ATP contacts are provided by residues leucine 277 and 298–299; that span reads HR.

It belongs to the 5'-AMP-activated protein kinase gamma subunit family. In terms of assembly, AMPK is a heterotrimer of an alpha catalytic subunit (PRKAA1 or PRKAA2), a beta (PRKAB1 or PRKAB2) and a gamma non-catalytic subunits (PRKAG1, PRKAG2 or PRKAG3). Interacts with FNIP1 and FNIP2. In terms of processing, phosphorylated by ULK1 and ULK2; leading to negatively regulate AMPK activity and suggesting the existence of a regulatory feedback loop between ULK1, ULK2 and AMPK. Post-translationally, glycosylated; O-GlcNAcylated by OGT, promoting the AMP-activated protein kinase (AMPK) activity.

In terms of biological role, AMP/ATP-binding subunit of AMP-activated protein kinase (AMPK), an energy sensor protein kinase that plays a key role in regulating cellular energy metabolism. In response to reduction of intracellular ATP levels, AMPK activates energy-producing pathways and inhibits energy-consuming processes: inhibits protein, carbohydrate and lipid biosynthesis, as well as cell growth and proliferation. AMPK acts via direct phosphorylation of metabolic enzymes, and by longer-term effects via phosphorylation of transcription regulators. Also acts as a regulator of cellular polarity by remodeling the actin cytoskeleton; probably by indirectly activating myosin. Gamma non-catalytic subunit mediates binding to AMP, ADP and ATP, leading to activate or inhibit AMPK: AMP-binding results in allosteric activation of alpha catalytic subunit (PRKAA1 or PRKAA2) both by inducing phosphorylation and preventing dephosphorylation of catalytic subunits. ADP also stimulates phosphorylation, without stimulating already phosphorylated catalytic subunit. ATP promotes dephosphorylation of catalytic subunit, rendering the AMPK enzyme inactive. The sequence is that of 5'-AMP-activated protein kinase subunit gamma-1 (PRKAG1) from Homo sapiens (Human).